We begin with the raw amino-acid sequence, 423 residues long: Serine hydroxymethyltransferase (423 aa).

(6S)-5,6,7,8-tetrahydrofolate-binding positions include Leu-121 and 125–127 (GHL). N6-(pyridoxal phosphate)lysine is present on Lys-230. (6S)-5,6,7,8-tetrahydrofolate is bound at residue 355–357 (SPF).

It belongs to the SHMT family. In terms of assembly, homodimer. The cofactor is pyridoxal 5'-phosphate.

It localises to the cytoplasm. The enzyme catalyses (6R)-5,10-methylene-5,6,7,8-tetrahydrofolate + glycine + H2O = (6S)-5,6,7,8-tetrahydrofolate + L-serine. The protein operates within one-carbon metabolism; tetrahydrofolate interconversion. It participates in amino-acid biosynthesis; glycine biosynthesis; glycine from L-serine: step 1/1. Catalyzes the reversible interconversion of serine and glycine with tetrahydrofolate (THF) serving as the one-carbon carrier. This reaction serves as the major source of one-carbon groups required for the biosynthesis of purines, thymidylate, methionine, and other important biomolecules. Also exhibits THF-independent aldolase activity toward beta-hydroxyamino acids, producing glycine and aldehydes, via a retro-aldol mechanism. This is Serine hydroxymethyltransferase from Hydrogenovibrio crunogenus (strain DSM 25203 / XCL-2) (Thiomicrospira crunogena).